A 329-amino-acid chain; its full sequence is Phenylalanine--tRNA ligase alpha subunit (329 aa).

Mg(2+) is bound at residue E254.

Belongs to the class-II aminoacyl-tRNA synthetase family. Phe-tRNA synthetase alpha subunit type 1 subfamily. As to quaternary structure, tetramer of two alpha and two beta subunits. The cofactor is Mg(2+).

The protein localises to the cytoplasm. The catalysed reaction is tRNA(Phe) + L-phenylalanine + ATP = L-phenylalanyl-tRNA(Phe) + AMP + diphosphate + H(+). The polypeptide is Phenylalanine--tRNA ligase alpha subunit (Haemophilus influenzae (strain PittEE)).